The primary structure comprises 317 residues: L-lactate dehydrogenase 1 (317 aa).

Residues valine 17, aspartate 38, lysine 43, tyrosine 69, and 83-84 (GA) contribute to the NAD(+) site. 2 residues coordinate substrate: glutamine 86 and arginine 92. Residues serine 105, 122–124 (ATN), and serine 147 contribute to the NAD(+) site. 124–127 (NPVD) lines the substrate pocket. 152–155 (DSAR) lines the substrate pocket. Histidine 179 (proton acceptor) is an active-site residue. At tyrosine 223 the chain carries Phosphotyrosine. Threonine 232 provides a ligand contact to substrate.

It belongs to the LDH/MDH superfamily. LDH family. Homotetramer.

The protein resides in the cytoplasm. The catalysed reaction is (S)-lactate + NAD(+) = pyruvate + NADH + H(+). Its pathway is fermentation; pyruvate fermentation to lactate; (S)-lactate from pyruvate: step 1/1. Catalyzes the conversion of lactate to pyruvate (Potential). Appears to be the primary factor that allows S.aureus growth during nitrosative stress in both aerobically and anaerobically cultured cells. In Staphylococcus aureus (strain USA300), this protein is L-lactate dehydrogenase 1.